We begin with the raw amino-acid sequence, 397 residues long: Digeranylgeranylglycerophospholipid reductase 3 (397 aa).

FAD is bound by residues Ala16, Asp35, Cys46, Ala47, Gly49, Arg102, Ala126, Asp283, Gly295, and Ile296. Lys338 is an a 2,3-bis-O-(geranylgeranyl)-sn-glycerol 1-phospholipid binding site.

This sequence belongs to the geranylgeranyl reductase family. DGGGPL reductase subfamily. FAD serves as cofactor.

The enzyme catalyses a 2,3-bis-O-phytanyl-sn-glycerol 1-phospholipid + 8 A = a 2,3-bis-O-(geranylgeranyl)-sn-glycerol 1-phospholipid + 8 AH2. It catalyses the reaction 2,3-bis-O-(phytanyl)-sn-glycerol 1-phosphate + 8 A = 2,3-bis-O-(geranylgeranyl)-sn-glycerol 1-phosphate + 8 AH2. The catalysed reaction is CDP-2,3-bis-O-(geranylgeranyl)-sn-glycerol + 8 AH2 = CDP-2,3-bis-O-(phytanyl)-sn-glycerol + 8 A. It carries out the reaction archaetidylserine + 8 AH2 = 2,3-bis-O-phytanyl-sn-glycero-3-phospho-L-serine + 8 A. It functions in the pathway membrane lipid metabolism; glycerophospholipid metabolism. Functionally, is involved in the reduction of 2,3-digeranylgeranylglycerophospholipids (unsaturated archaeols) into 2,3-diphytanylglycerophospholipids (saturated archaeols) in the biosynthesis of archaeal membrane lipids. Catalyzes the formation of archaetidic acid (2,3-di-O-phytanyl-sn-glyceryl phosphate) from 2,3-di-O-geranylgeranylglyceryl phosphate (DGGGP) via the hydrogenation of each double bond of the isoprenoid chains. Is also probably able to reduce double bonds of geranyl groups in CDP-2,3-bis-O-(geranylgeranyl)-sn-glycerol and archaetidylserine, thus acting at various stages in the biosynthesis of archaeal membrane lipids. This Methanosphaera stadtmanae (strain ATCC 43021 / DSM 3091 / JCM 11832 / MCB-3) protein is Digeranylgeranylglycerophospholipid reductase 3.